Reading from the N-terminus, the 115-residue chain is MNTIIKNIEDAQLKAQAPEFRVGDTVRVSAKIKEGNRERIQVFEGTVLKKQGTGVRATFTVRKISNGVGVEKTWPLHSPIVEKVEVVRRGKARRAKLNYLRQRTGKAAKVKELVR.

The protein belongs to the bacterial ribosomal protein bL19 family.

Its function is as follows. This protein is located at the 30S-50S ribosomal subunit interface and may play a role in the structure and function of the aminoacyl-tRNA binding site. The polypeptide is Large ribosomal subunit protein bL19 (Lachnospira eligens (strain ATCC 27750 / DSM 3376 / VPI C15-48 / C15-B4) (Eubacterium eligens)).